Consider the following 376-residue polypeptide: TraB domain-containing protein (376 aa).

At M1 the chain carries N-acetylmethionine. T64 carries the post-translational modification Phosphothreonine.

The sequence is that of TraB domain-containing protein (Trabd) from Mus musculus (Mouse).